Consider the following 203-residue polypeptide: Peptide deformylase (203 aa).

Fe cation contacts are provided by Cys-130 and His-173. The active site involves Glu-174. His-177 lines the Fe cation pocket.

It belongs to the polypeptide deformylase family. Requires Fe(2+) as cofactor.

It catalyses the reaction N-terminal N-formyl-L-methionyl-[peptide] + H2O = N-terminal L-methionyl-[peptide] + formate. Functionally, removes the formyl group from the N-terminal Met of newly synthesized proteins. Requires at least a dipeptide for an efficient rate of reaction. N-terminal L-methionine is a prerequisite for activity but the enzyme has broad specificity at other positions. The protein is Peptide deformylase of Streptococcus pneumoniae serotype 2 (strain D39 / NCTC 7466).